The primary structure comprises 425 residues: AP-3 complex subunit mu (425 aa).

The 249-residue stretch at 175 to 423 folds into the MHD domain; it reads TNEFFIHVLE…TIIAQNVSFR (249 aa).

Belongs to the adaptor complexes medium subunit family.

It is found in the cytoplasm. The protein resides in the cytoskeleton. The protein localises to the microtubule organizing center. It localises to the spindle pole body. Its subcellular location is the membrane. It is found in the golgi apparatus. The protein resides in the cytoplasmic vesicle membrane. Functionally, part of the AP-3 complex, an adaptor-related complex which is not clathrin-associated. The complex is associated with the Golgi region as well as more peripheral structures. It facilitates the budding of vesicles from the Golgi membrane and may be directly involved in trafficking to the vacuole. The chain is AP-3 complex subunit mu (apm3) from Schizosaccharomyces pombe (strain 972 / ATCC 24843) (Fission yeast).